A 764-amino-acid polypeptide reads, in one-letter code: ATP-dependent DNA helicase DDM1 (764 aa).

The disordered stretch occupies residues 1–42; the sequence is MVSLRSRKVIPASEMVSDGKTEKDASGDSPTSVLNEEENCEE. Residues 17 to 26 show a composition bias toward basic and acidic residues; that stretch reads SDGKTEKDAS. Residues 62 to 88 are a coiled coil; sequence LISEAMAQEEEQLLKLREDEEKANNAG. A disordered region spans residues 129 to 152; the sequence is IESESQKAEPEKTGRGRKRKAASQ. Basic and acidic residues predominate over residues 132 to 142; that stretch reads ESQKAEPEKTG. The short motif at 145–152 is the Nuclear localization signal 1 element; sequence RKRKAASQ. Residues 214 to 382 form the Helicase ATP-binding domain; the sequence is ISLWQNGLNG…WSLLNFILPD (169 aa). 227-234 contacts ATP; it reads DQMGLGKT. Positions 333 to 336 match the DEAH box motif; it reads DEGH. Positions 429–436 match the Nuclear localization signal 2 motif; it reads LRRMKCDV. Residues 528-695 enclose the Helicase C-terminal domain; the sequence is LLERLLVRLF…STPLEEEDIL (168 aa).

The protein belongs to the SNF2/RAD54 helicase family. Interacts with the MBD domains of MBD2, MBD5 and MBD6.

The protein resides in the nucleus. It carries out the reaction ATP + H2O = ADP + phosphate + H(+). ATPase activity is stimulated 3-fold by DNA (both free and nucleosomal) binding. ATP-dependent DNA helicase that plays a role in formation, organization, stability and heritability of heterochromatin and thus regulates several physiological traits. Binds to the nucleosome and promotes chromatin remodeling in an ATP-dependent manner; induces nucleosome repositioning on a short DNA fragment, and, possibly, could be guided to target sites (including silent transposable elements) by small interfering RNAs (siRNAs). Can bind both free and nucleosomal DNA. Required for the heritable maintenance of genome integrity and transcriptional gene silencing (TGS), including homology-dependent gene silencing (HDG silencing), via the maintenance of DNA methylation (mostly on cytosine, in both CpG and CpHpG sites, where H is A, T or C) and of histone methylation (e.g. chromatin methylation). May facilitate localization of MBD proteins at specific nuclear domains. Necessary for the maintenance of the genomic imprint at the MEA locus, especially for the silencing of paternally inherited MEA locus. Plays a major role in the inactivation maintenance of retrotransposons (e.g. Tar17, SINE, LINE, ATLN39, CAC1 (CACTAs), Athila elements, and mutator-like elements MULEs and TIR-MULEs) and the silencing of repeated genes and transgenes (e.g. T-DNA insertions). Required for KYP-dependent histone H3 'Lys-9' (H3K9me) methylation, deacetylation of histone H4 'Lys-16' (H4K16) and MET1-dependent DNA methylation. Involved in the chromatin organization of 5S rRNA genes (localized in the pericentromeric heterochromatin of chromosomes 3, 4, and 5) modifications during heterochromatin establishment. Prevents siRNA accumulation (siRNA are probably involved in epigenetic inheritance and in 5S rRNA genes regulation by silencing). Required during plant organogenesis and development, as well as during seed formation. In Arabidopsis thaliana (Mouse-ear cress), this protein is ATP-dependent DNA helicase DDM1 (DDM1).